Consider the following 2025-residue polypeptide: E3 ubiquitin-protein ligase TRIP12 (2025 aa).

Residues 1 to 10 show a composition bias toward polar residues; it reads MSNRPNNNPG. Residues 1–404 form a disordered region; sequence MSNRPNNNPG…SGESESDDSE (404 aa). Position 2 is an N-acetylserine (Ser-2). Ser-12 is subject to Phosphoserine. Polar residues predominate over residues 18 to 27; that stretch reads RNTAGAQPQD. Positions 48 to 70 are enriched in basic and acidic residues; it reads DPDRANTSERQKTGQVPKKDNSR. Ser-77, Ser-85, and Ser-100 each carry phosphoserine. 3 stretches are compositionally biased toward polar residues: residues 78–88, 99–108, and 119–132; these read PDYNRTNSPSS, ESLSETNKPP, and EQQL…STSK. Low complexity-rich tracts occupy residues 154–166 and 175–216; these read SSCV…SEST and PTKL…SSTV. Lys-181 carries the post-translational modification N6-acetyllysine. Residues 280–290 show a composition bias toward polar residues; the sequence is PGSSKSETSKP. Ser-310 and Ser-312 each carry phosphoserine. Polar residues predominate over residues 326–338; it reads QKTTGSCASTSRR. Residues 346-358 are compositionally biased toward basic and acidic residues; it reads GAAEARRQEKMAD. The span at 362–371 shows a compositional bias: polar residues; the sequence is NQETVNSSAA. Over residues 379 to 397 the composition is skewed to low complexity; it reads GAAASSSVAGAVGMTTSGE. A WWE domain is found at 755-869; the sequence is MLKKGNAQNT…DPELAKSFIK (115 aa). The segment at 970 to 1077 is disordered; that stretch reads ESLLTSPPKA…QSPKSSFLAS (108 aa). Ser-975 is modified (phosphoserine). The segment covering 983-1006 has biased composition (low complexity); that stretch reads GSGSLGSTTPASSGTATAATNASA. Phosphoserine is present on residues Ser-1024 and Ser-1030. The span at 1034 to 1047 shows a compositional bias: basic residues; that stretch reads KRKRLPKRGPRRPK. The residue at position 1049 (Ser-1049) is a Phosphoserine. Positions 1050–1059 are enriched in basic and acidic residues; that stretch reads PPRDDDKVDN. A compositionally biased stretch (low complexity) spans 1062 to 1073; that stretch reads KSPTTTQSPKSS. Phosphoserine occurs at positions 1063, 1350, 1355, 1362, and 1409. Thr-1410 bears the Phosphothreonine mark. Disordered stretches follow at residues 1440-1466 and 1601-1620; these read SSKD…NAKK and TNPE…PRLD. The residue at position 1458 (Lys-1458) is an N6-acetyllysine. Ser-1460 carries the phosphoserine modification. Residues 1529-1603 form a K-box region; that stretch reads EIIPTSEFIN…AMQRLLDTNP (75 aa). Residues 1918–2025 form the HECT domain; the sequence is PDHGYTHDSR…REGQQSFHLS (108 aa). Catalysis depends on Cys-1992, which acts as the Glycyl thioester intermediate.

This sequence belongs to the UPL family. K-HECT subfamily. Interacts with MYC; leading to disrupt interaction with isoform p19ARF/ARF of CDKN2A. Interacts with TRADD; leading to disrupt interaction with isoform p19ARF/ARF of CDKN2A. Interacts with SMARCC1; leading to disrupt interaction with SMARCE1.

Its subcellular location is the nucleus. It localises to the nucleoplasm. It catalyses the reaction S-ubiquitinyl-[E2 ubiquitin-conjugating enzyme]-L-cysteine + [acceptor protein]-L-lysine = [E2 ubiquitin-conjugating enzyme]-L-cysteine + N(6)-ubiquitinyl-[acceptor protein]-L-lysine.. The protein operates within protein modification; protein ubiquitination. E3 ubiquitin-protein ligase involved in ubiquitin fusion degradation (UFD) pathway and regulation of DNA repair. Part of the ubiquitin fusion degradation (UFD) pathway, a process that mediates ubiquitination of protein at their N-terminus, regardless of the presence of lysine residues in target proteins. Acts as a key regulator of DNA damage response by acting as a suppressor of RNF168, an E3 ubiquitin-protein ligase that promotes accumulation of 'Lys-63'-linked histone H2A and H2AX at DNA damage sites, thereby acting as a guard against excessive spreading of ubiquitinated chromatin at damaged chromosomes. In normal cells, mediates ubiquitination and degradation of isoform p19ARF/ARF of CDKN2A, a lysine-less tumor suppressor required for p53/TP53 activation under oncogenic stress. In cancer cells, however, isoform p19ARF/ARF and TRIP12 are located in different cell compartments, preventing isoform p19ARF/ARF ubiquitination and degradation. Does not mediate ubiquitination of isoform p16-INK4a of CDKN2A. Also catalyzes ubiquitination of NAE1 and SMARCE1, leading to their degradation. Ubiquitination and degradation of target proteins is regulated by interaction with proteins such as MYC, TRADD or SMARCC1, which disrupt the interaction between TRIP12 and target proteins. Mediates ubiquitination of ASXL1: following binding to N(6)-methyladenosine methylated DNA, ASXL1 is ubiquitinated by TRIP12, leading to its degradation and subsequent inactivation of the PR-DUB complex. This chain is E3 ubiquitin-protein ligase TRIP12 (Trip12), found in Rattus norvegicus (Rat).